The chain runs to 173 residues: RNA pyrophosphohydrolase (173 aa).

Residues 11 to 164 form the Nudix hydrolase domain; that stretch reads PYRRSVGILV…KKHVYMKIVN (154 aa). The Nudix box motif lies at 52 to 73; the sequence is GGIDENEEPLDAARRELYEETG.

This sequence belongs to the Nudix hydrolase family. RppH subfamily. It depends on a divalent metal cation as a cofactor.

Its function is as follows. Accelerates the degradation of transcripts by removing pyrophosphate from the 5'-end of triphosphorylated RNA, leading to a more labile monophosphorylated state that can stimulate subsequent ribonuclease cleavage. The protein is RNA pyrophosphohydrolase of Bartonella henselae (strain ATCC 49882 / DSM 28221 / CCUG 30454 / Houston 1) (Rochalimaea henselae).